The chain runs to 68 residues: Large ribosomal subunit protein uL29 (68 aa).

The protein belongs to the universal ribosomal protein uL29 family.

The sequence is that of Large ribosomal subunit protein uL29 from Streptococcus uberis (strain ATCC BAA-854 / 0140J).